The sequence spans 486 residues: Putative protease Do-like 13 (486 aa).

The interval 44 to 229 is serine protease; the sequence is KINTFSSKPN…IPAPVVKHFI (186 aa). Active-site charge relay system residues include His-83, Asp-114, and Ser-192. The PDZ domain occupies 241–334; it reads FCSLNLSYQH…TILLKILREG (94 aa).

The protein belongs to the peptidase S1C family.

Putative serine protease. The polypeptide is Putative protease Do-like 13 (DEGP13) (Arabidopsis thaliana (Mouse-ear cress)).